The chain runs to 108 residues: Urease subunit beta (108 aa).

This sequence belongs to the urease beta subunit family. In terms of assembly, heterotrimer of UreA (gamma), UreB (beta) and UreC (alpha) subunits. Three heterotrimers associate to form the active enzyme.

It is found in the cytoplasm. It catalyses the reaction urea + 2 H2O + H(+) = hydrogencarbonate + 2 NH4(+). It functions in the pathway nitrogen metabolism; urea degradation; CO(2) and NH(3) from urea (urease route): step 1/1. This Nocardia farcinica (strain IFM 10152) protein is Urease subunit beta.